The sequence spans 429 residues: Histidine--tRNA ligase (429 aa).

Belongs to the class-II aminoacyl-tRNA synthetase family. Homodimer.

Its subcellular location is the cytoplasm. It carries out the reaction tRNA(His) + L-histidine + ATP = L-histidyl-tRNA(His) + AMP + diphosphate + H(+). This chain is Histidine--tRNA ligase, found in Streptococcus pneumoniae serotype 2 (strain D39 / NCTC 7466).